Here is a 313-residue protein sequence, read N- to C-terminus: Olfactory receptor 1M1 (313 aa).

The Extracellular portion of the chain corresponds to 1 to 25 (MEPQNHTSASEFILLGLSEKPDHDP). N-linked (GlcNAc...) asparagine glycosylation occurs at asparagine 5. Residues 26 to 46 (VLFSLFLCMYMITVVGNLLII) form a helical membrane-spanning segment. Residues 47-54 (LAISFDSH) are Cytoplasmic-facing. The chain crosses the membrane as a helical span at residues 55 to 75 (LHTPMYFFLANLSLVDFCLAT). At 76–97 (NTVPKMLVNIQTRNKSISYPCC) the chain is on the extracellular side. An N-linked (GlcNAc...) asparagine glycan is attached at asparagine 89. A disulfide bond links cysteine 97 and cysteine 179. Residues 98-118 (LTQMYFFHFFGIMDSVLIAVM) form a helical membrane-spanning segment. Topologically, residues 119–142 (AYDRFVAICHPLHYSTIMSPRLCG) are cytoplasmic. Residues 143-163 (LLVGVPWVYSCFISLTHILLM) form a helical membrane-spanning segment. Over 164 to 196 (ARLVFCGKNELPHYFCDLTPLLRLSCTDTTVNK) the chain is Extracellular. Residues 197 to 217 (IFVLIVAGMVIATPFVCILAS) form a helical membrane-spanning segment. The Cytoplasmic portion of the chain corresponds to 218 to 244 (YARIIVAIMKVPSAGGRKKAFSTCSSH). Residues 245–265 (LSVVALFYGTTIGVYLCPSSV) traverse the membrane as a helical segment. At 266 to 274 (RTAVKEKAS) the chain is on the extracellular side. A helical transmembrane segment spans residues 275–292 (AVMYTAVTPMLNPFIYSL). Topologically, residues 293 to 313 (RNRDLKGALKKIINRKISTSS) are cytoplasmic.

The protein belongs to the G-protein coupled receptor 1 family. As to expression, expressed in testis.

It localises to the cell membrane. Odorant receptor. This Mus musculus (Mouse) protein is Olfactory receptor 1M1.